The primary structure comprises 345 residues: V-type proton ATPase subunit d (345 aa).

M1 carries the N-acetylmethionine modification.

It belongs to the V-ATPase V0D/AC39 subunit family. In terms of assembly, V-ATPase is a heteromultimeric enzyme composed of a peripheral catalytic V1 complex (components A to H) attached to an integral membrane V0 proton pore complex (components: a, c, c', c'', d, e, f and VOA1).

The protein localises to the vacuole membrane. Its function is as follows. Subunit of the V0 complex of vacuolar(H+)-ATPase (V-ATPase), a multisubunit enzyme composed of a peripheral complex (V1) that hydrolyzes ATP and a membrane integral complex (V0) that translocates protons. V-ATPase is responsible for acidifying and maintaining the pH of intracellular compartments. This subunit is a non-integral membrane component of the membrane pore domain and is required for proper assembly of the V0 sector. Might be involved in the regulated assembly of V1 subunits onto the membrane sector or alternatively may prevent the passage of protons through V0 pores. The sequence is that of V-type proton ATPase subunit d from Saccharomyces cerevisiae (strain ATCC 204508 / S288c) (Baker's yeast).